The sequence spans 283 residues: Bifunctional protein FolD (283 aa).

Residues 165-167 (GRS), Ser190, and Thr231 contribute to the NADP(+) site.

The protein belongs to the tetrahydrofolate dehydrogenase/cyclohydrolase family. Homodimer.

The enzyme catalyses (6R)-5,10-methylene-5,6,7,8-tetrahydrofolate + NADP(+) = (6R)-5,10-methenyltetrahydrofolate + NADPH. It catalyses the reaction (6R)-5,10-methenyltetrahydrofolate + H2O = (6R)-10-formyltetrahydrofolate + H(+). It participates in one-carbon metabolism; tetrahydrofolate interconversion. Functionally, catalyzes the oxidation of 5,10-methylenetetrahydrofolate to 5,10-methenyltetrahydrofolate and then the hydrolysis of 5,10-methenyltetrahydrofolate to 10-formyltetrahydrofolate. In Nocardia farcinica (strain IFM 10152), this protein is Bifunctional protein FolD.